A 32-amino-acid chain; its full sequence is Hainantoxin F8-35.23 (32 aa).

As to expression, expressed by the venom gland.

Its subcellular location is the secreted. This chain is Hainantoxin F8-35.23, found in Cyriopagopus hainanus (Chinese bird spider).